The sequence spans 1052 residues: Mediator of RNA polymerase II transcription subunit 5 (1052 aa).

Positions 949-982 (GGDDEQREQHQQQQPDADQSNQGVVAPTGNTPGN) are disordered. The segment covering 959-970 (QQQQPDADQSNQ) has biased composition (low complexity).

It belongs to the Mediator complex subunit 5 family. Component of the Mediator complex.

Its subcellular location is the nucleus. Functionally, component of the Mediator complex, a coactivator involved in the regulated transcription of nearly all RNA polymerase II-dependent genes. Mediator functions as a bridge to convey information from gene-specific regulatory proteins to the basal RNA polymerase II transcription machinery. Mediator is recruited to promoters by direct interactions with regulatory proteins and serves as a scaffold for the assembly of a functional preinitiation complex with RNA polymerase II and the general transcription factors. In Coccidioides immitis (strain RS) (Valley fever fungus), this protein is Mediator of RNA polymerase II transcription subunit 5 (NUT1).